The following is a 207-amino-acid chain: Ribosome maturation factor RimM (207 aa).

One can recognise a PRC barrel domain in the interval 130-207 (EDEFYWVDLI…RIVVDWGLDY (78 aa)).

The protein belongs to the RimM family. In terms of assembly, binds ribosomal protein uS19.

It localises to the cytoplasm. Its function is as follows. An accessory protein needed during the final step in the assembly of 30S ribosomal subunit, possibly for assembly of the head region. Essential for efficient processing of 16S rRNA. May be needed both before and after RbfA during the maturation of 16S rRNA. It has affinity for free ribosomal 30S subunits but not for 70S ribosomes. This chain is Ribosome maturation factor RimM, found in Cupriavidus taiwanensis (strain DSM 17343 / BCRC 17206 / CCUG 44338 / CIP 107171 / LMG 19424 / R1) (Ralstonia taiwanensis (strain LMG 19424)).